Here is a 67-residue protein sequence, read N- to C-terminus: GVRDGYIAQPHNCVYHCFPGSGGCDTLCKENGATQGSSCFILGRGTACWCKDLPDRVGVIVDGEKCH.

The LCN-type CS-alpha/beta domain occupies 3 to 67 (RDGYIAQPHN…GVIVDGEKCH (65 aa)). 4 disulfide bridges follow: cysteine 13–cysteine 66, cysteine 17–cysteine 39, cysteine 24–cysteine 48, and cysteine 28–cysteine 50.

This sequence belongs to the long (4 C-C) scorpion toxin superfamily. Sodium channel inhibitor family. Alpha subfamily. Expressed by the venom gland.

It is found in the secreted. Binds to sodium channels (Nav) and inhibits the inactivation of the activated channels, thereby blocking neuronal transmission. The protein is Neurotoxin Os3 of Orthochirus scrobiculosus (Central Asian scorpion).